Reading from the N-terminus, the 210-residue chain is Probable transcriptional regulator ycf29 (210 aa).

In terms of domain architecture, Response regulatory spans 3 to 119; sequence NILILDTDIG…ELVVIIEGVL (117 aa). Aspartate 52 is subject to 4-aspartylphosphate. The HTH luxR-type domain occupies 142–207; it reads SNNLKINFTP…ELVKYALENN (66 aa).

The protein localises to the plastid. Its subcellular location is the cyanelle. This is Probable transcriptional regulator ycf29 (ycf29) from Cyanophora paradoxa.